The primary structure comprises 199 residues: DnaJ homolog subfamily C member 5B (199 aa).

Ser-14 carries the phosphoserine modification. In terms of domain architecture, J spans 19-84 (ALYEILGLHK…SKRSIYDKYG (66 aa)).

In terms of assembly, interacts with the chaperone complex consisting of HSC70 and SGTA. Post-translationally, palmitoylated. Palmitoylation is not required for membrane association. As to expression, testis specific.

The protein localises to the membrane. This chain is DnaJ homolog subfamily C member 5B (DNAJC5B), found in Homo sapiens (Human).